We begin with the raw amino-acid sequence, 118 residues long: uncharacterized protein (118 aa).

A helical transmembrane segment spans residues 21-38; sequence IVYFFFFFGLETFFSIIN.

The protein localises to the membrane. This is an uncharacterized protein from Dictyostelium discoideum (Social amoeba).